The sequence spans 244 residues: Ribonuclease 3 (244 aa).

One can recognise an RNase III domain in the interval 17–146; the sequence is FEKKMQELNL…FVGALYLDQG (130 aa). Mg(2+) is bound at residue Glu-59. The active site involves Asp-63. 2 residues coordinate Mg(2+): Asp-132 and Glu-135. Glu-135 is a catalytic residue. Positions 172 to 241 constitute a DRBM domain; it reads DFKTQFQEYV…AERAYKILKN (70 aa).

This sequence belongs to the ribonuclease III family. In terms of assembly, homodimer. Mg(2+) is required as a cofactor.

It localises to the cytoplasm. The catalysed reaction is Endonucleolytic cleavage to 5'-phosphomonoester.. Digests double-stranded RNA. Involved in the processing of primary rRNA transcript to yield the immediate precursors to the large and small rRNAs (23S and 16S). Processes some mRNAs, and tRNAs when they are encoded in the rRNA operon. Processes pre-crRNA and tracrRNA of type II CRISPR loci if present in the organism. The chain is Ribonuclease 3 from Staphylococcus saprophyticus subsp. saprophyticus (strain ATCC 15305 / DSM 20229 / NCIMB 8711 / NCTC 7292 / S-41).